Here is a 178-residue protein sequence, read N- to C-terminus: Small ribosomal subunit protein uS5 (178 aa).

In terms of domain architecture, S5 DRBM spans 17–80 (FEERIVEIRR…AAARASVVEI (64 aa)).

Belongs to the universal ribosomal protein uS5 family. As to quaternary structure, part of the 30S ribosomal subunit. Contacts proteins S4 and S8.

With S4 and S12 plays an important role in translational accuracy. Its function is as follows. Located at the back of the 30S subunit body where it stabilizes the conformation of the head with respect to the body. In Pseudothermotoga lettingae (strain ATCC BAA-301 / DSM 14385 / NBRC 107922 / TMO) (Thermotoga lettingae), this protein is Small ribosomal subunit protein uS5.